The chain runs to 640 residues: RAP domain-containing protein, chloroplastic (640 aa).

Residues 1–32 constitute a chloroplast transit peptide; sequence MEAALLRPPPLAARGGVSIAIAFSVSRLPSAA. The disordered stretch occupies residues 111–158; it reads SLQRMVASPKKKNKKKKSKKTNLKQKKAAEPKPPRDTDDDEDDEEEAD. Over residues 119-136 the composition is skewed to basic residues; sequence PKKKNKKKKSKKTNLKQK. Residues 137 to 146 are compositionally biased toward basic and acidic residues; the sequence is KAAEPKPPRD. The segment covering 147–158 has biased composition (acidic residues); it reads TDDDEDDEEEAD. Residues 575–633 enclose the RAP domain; the sequence is LAFEIDGPSHFSRNLGTPLGHTAFKRRYIAAAGWNLVSLSHQEWENLEGEFEQLEYLRR.

As to expression, expressed in roots, leaf sheaths, veins of leaf blade, mature leaves, endodermis of culm, panicles and anthers.

The protein localises to the plastid. Its subcellular location is the chloroplast. In terms of biological role, probable RNA-binding protein that plays an essential role in chloroplast development. Regulates the ribosomal proteins homeostasis and ribosomal RNA development in chloroplasts. Involved the regulation of 16S rRNA and required for the expression of chloroplast-associated photosynthetic genes. This is RAP domain-containing protein, chloroplastic from Oryza sativa subsp. japonica (Rice).